The sequence spans 221 residues: Serine/arginine-rich splicing factor 2 (221 aa).

Ser2 bears the N-acetylserine mark. A Phosphoserine modification is found at Ser2. The RRM domain occupies 14–92; that stretch reads TSLKVDNLTY…RELRVQMARY (79 aa). A phosphothreonine mark is found at Thr22 and Thr25. Ser26 carries the post-translational modification Phosphoserine. An N6-acetyllysine modification is found at Lys52. Positions 92 to 221 are disordered; it reads YGRPPDSHHS…SPEEEGAVSS (130 aa). 2 stretches are compositionally biased toward basic residues: residues 117–171 and 179–189; these read RRSR…RSKS and SRSRSRSRSRS. Residues Ser189, Ser191, Ser204, Ser206, Ser208, Ser212, and Ser220 each carry the phosphoserine modification.

This sequence belongs to the splicing factor SR family. In terms of assembly, interacts with CCNL1 and CCNL2. Interacts with SCAF11. Interacts with ZRSR2/U2AF1-RS2. Interacts with CCDC55 (via C-terminus). In vitro, self-associates and binds SRSF1/SFRS1 (ASF/SF2), SNRNP70 and U2AF1 but not U2AF2. Binds SREK1/SFRS12. Interacts with BRDT. Post-translationally, extensively phosphorylated on serine residues in the RS domain. Phosphorylated by SRPK2 and this causes its redistribution from the nuclear speckle to nucleoplasm and controls cell fate decision in response to cisplatin treatment. KAT5/TIP60 inhibits its phosphorylation by preventing SRPK2 nuclear translocation. In terms of processing, acetylation on Lys-52 by KAT5/TIP60 promotes its proteasomal degradation. This effect is counterbalanced by HDAC6, which positively controls SRSF2 protein level by deacetylating it and preventing its proteasomal degradation. Expressed in all the tissues examined; liver, kidney, spleen, heart, lung and brain.

It localises to the nucleus. The protein resides in the nucleoplasm. Its subcellular location is the nucleus speckle. Necessary for the splicing of pre-mRNA. It is required for formation of the earliest ATP-dependent splicing complex and interacts with spliceosomal components bound to both the 5'- and 3'-splice sites during spliceosome assembly. It also is required for ATP-dependent interactions of both U1 and U2 snRNPs with pre-mRNA. Can bind to the myelin basic protein (MBP) gene MB3 regulatory region and increase transcription of the mbp promoter in cells derived from the CNS. The phosphorylated form (by SRPK2) is required for cellular apoptosis in response to cisplatin treatment. This is Serine/arginine-rich splicing factor 2 (Srsf2) from Mus musculus (Mouse).